A 305-amino-acid polypeptide reads, in one-letter code: MRSNSVNIETFKDMLKRYEDFKMKNKREPRVIFIRSGGGESIPLETFRDMVRRYNNFKDRYGREPRIVYVTPPEPPVPEVNENTPEYVSITQFKDMLSRYNRFKEVNGREPRVVFIYSGGGPSVSLETFKDMCKRYNQFLEENRREPRIVYVTPPEPPVPEEVREMRRVLGEFKTATQLYTLVSRRCKYKFYYNDQTPNREALKKMVTDGINCTDACQLFKPVIEGLGYSVRIEHVKVRCNDNKWYGHYFLRVAGKELASVSLPSERWTVWDYVSATKTGRPLGAPCCSRGIQHLGWGIVSPKHD.

4 pseudomurein-binding repeat regions span residues 3-34, 39-70, 87-116, and 121-152; these read SNSVNIETFKDMLKRYEDFKMKNKREPRVIFI, GESIPLETFRDMVRRYNNFKDRYGREPRIVYV, YVSITQFKDMLSRYNRFKEVNGREPRVVFI, and GPSVSLETFKDMCKRYNQFLEENRREPRIVYV. Active-site residues include cysteine 213, histidine 248, and aspartate 272.

It belongs to the Psimunavirus Pseudomurein endoisopeptidase family. Monomer. Ca(2+) is required as a cofactor.

Its function is as follows. Cysteine protease that cleaves the cell wall of its host methanogen under hydrogen limitation of the latter (autolysis). Cleaves the epsilon-Ala-Lys isopeptide bond in the oligopeptides of pseudomurein. This is Pseudomurein endoisopeptidase (peiP) from Methanobacterium phage psiM2 (PsiM2).